The chain runs to 97 residues: MSIRPLHDRVIVKRKEVESKSAGGIVLTGSAAGKSTRGEIIAVGKGRILDNGTVQPLDVKVGDIVIFNDGYGVKSEKIDNEEVLIMSESDILAIVEA.

It belongs to the GroES chaperonin family. In terms of assembly, heptamer of 7 subunits arranged in a ring. Interacts with the chaperonin GroEL.

Its subcellular location is the cytoplasm. In terms of biological role, together with the chaperonin GroEL, plays an essential role in assisting protein folding. The GroEL-GroES system forms a nano-cage that allows encapsulation of the non-native substrate proteins and provides a physical environment optimized to promote and accelerate protein folding. GroES binds to the apical surface of the GroEL ring, thereby capping the opening of the GroEL channel. The protein is Co-chaperonin GroES of Salmonella agona (strain SL483).